The following is a 783-amino-acid chain: DNA polymerase II (783 aa).

Belongs to the DNA polymerase type-B family.

It catalyses the reaction DNA(n) + a 2'-deoxyribonucleoside 5'-triphosphate = DNA(n+1) + diphosphate. DNA polymerase II activity is regulated by the lexA gene during the SOS response. Functionally, thought to be involved in DNA repair and/or mutagenesis. Its processivity is enhanced by the beta sliding clamp (dnaN) and clamp loader. This is DNA polymerase II (polB) from Escherichia coli (strain K12).